A 751-amino-acid polypeptide reads, in one-letter code: Semaphorin-3C (751 aa).

The signal sequence occupies residues 1-20; it reads MAFRAICVLVGVFICSICVR. Residues 28-511 form the Sema domain; that stretch reads RVYLTFDELR…SNEGVSQVSL (484 aa). N-linked (GlcNAc...) asparagine glycosylation occurs at N81. A disulfide bridge connects residues C101 and C112. An N-linked (GlcNAc...) asparagine glycan is attached at N123. C130 and C139 are oxidised to a cystine. N252 and N268 each carry an N-linked (GlcNAc...) asparagine glycan. Cystine bridges form between C266–C378 and C290–C338. N-linked (GlcNAc...) asparagine glycosylation is present at N465. The cysteines at positions 514 and 532 are disulfide-linked. The 85-residue stretch at 571 to 655 folds into the Ig-like C2-type domain; the sequence is AYRNAAEIVQ…TENSFKQTIA (85 aa). N-linked (GlcNAc...) asparagine glycans are attached at residues N585 and N586. A disulfide bridge links C643 with C709.

The protein belongs to the semaphorin family. As to quaternary structure, interacts with PLXND1.

It is found in the secreted. In terms of biological role, binds to plexin family members and plays an important role in the regulation of developmental processes. Required for normal cardiovascular development during embryogenesis. Functions as attractant for growing axons, and thereby plays an important role in axon growth and axon guidance. In Mus musculus (Mouse), this protein is Semaphorin-3C (Sema3c).